A 208-amino-acid polypeptide reads, in one-letter code: Uracil phosphoribosyltransferase (208 aa).

5-phospho-alpha-D-ribose 1-diphosphate contacts are provided by residues Arg78, Arg103, and 130–138; that span reads DPMLATGGS. Uracil contacts are provided by residues Ile193 and 198 to 200; that span reads GDA. Residue Asp199 participates in 5-phospho-alpha-D-ribose 1-diphosphate binding.

Belongs to the UPRTase family. The cofactor is Mg(2+).

The catalysed reaction is UMP + diphosphate = 5-phospho-alpha-D-ribose 1-diphosphate + uracil. The protein operates within pyrimidine metabolism; UMP biosynthesis via salvage pathway; UMP from uracil: step 1/1. Its activity is regulated as follows. Allosterically activated by GTP. Functionally, catalyzes the conversion of uracil and 5-phospho-alpha-D-ribose 1-diphosphate (PRPP) to UMP and diphosphate. This is Uracil phosphoribosyltransferase from Glaesserella parasuis serovar 5 (strain SH0165) (Haemophilus parasuis).